The primary structure comprises 385 residues: 3-hydroxyisobutyryl-CoA hydrolase, mitochondrial (385 aa).

Substrate is bound by residues Glu120, Gly145, Glu168, and Asp176.

Belongs to the enoyl-CoA hydratase/isomerase family.

It localises to the mitochondrion. The enzyme catalyses 3-hydroxy-2-methylpropanoyl-CoA + H2O = 3-hydroxy-2-methylpropanoate + CoA + H(+). The protein operates within amino-acid degradation; L-valine degradation. In terms of biological role, hydrolyzes 3-hydroxyisobutyryl-CoA (HIBYL-CoA), a saline catabolite. Has high activity toward isobutyryl-CoA. Could be an isobutyryl-CoA dehydrogenase that functions in valine catabolism. Also hydrolyzes 3-hydroxypropanoyl-CoA. In Xenopus tropicalis (Western clawed frog), this protein is 3-hydroxyisobutyryl-CoA hydrolase, mitochondrial (hibch).